The chain runs to 164 residues: SsrA-binding protein (164 aa).

The disordered stretch occupies residues 141-164 (KLHDKRQDEKQKSIKKEINSALKR). Over residues 145–158 (KRQDEKQKSIKKEI) the composition is skewed to basic and acidic residues.

The protein belongs to the SmpB family.

It localises to the cytoplasm. In terms of biological role, required for rescue of stalled ribosomes mediated by trans-translation. Binds to transfer-messenger RNA (tmRNA), required for stable association of tmRNA with ribosomes. tmRNA and SmpB together mimic tRNA shape, replacing the anticodon stem-loop with SmpB. tmRNA is encoded by the ssrA gene; the 2 termini fold to resemble tRNA(Ala) and it encodes a 'tag peptide', a short internal open reading frame. During trans-translation Ala-aminoacylated tmRNA acts like a tRNA, entering the A-site of stalled ribosomes, displacing the stalled mRNA. The ribosome then switches to translate the ORF on the tmRNA; the nascent peptide is terminated with the 'tag peptide' encoded by the tmRNA and targeted for degradation. The ribosome is freed to recommence translation, which seems to be the essential function of trans-translation. This Prochlorococcus marinus (strain AS9601) protein is SsrA-binding protein.